A 102-amino-acid chain; its full sequence is Integration host factor subunit beta (102 aa).

The protein belongs to the bacterial histone-like protein family. In terms of assembly, heterodimer of an alpha and a beta chain.

Its function is as follows. This protein is one of the two subunits of integration host factor, a specific DNA-binding protein that functions in genetic recombination as well as in transcriptional and translational control. This is Integration host factor subunit beta from Rhodopseudomonas palustris (strain BisA53).